Reading from the N-terminus, the 91-residue chain is Putative transmembrane protein encoded by LINC00862 (91 aa).

The helical transmembrane segment at 49–69 (IMALILMPSLHCFGNILILLF) threads the bilayer.

The protein resides in the membrane. The sequence is that of Putative transmembrane protein encoded by LINC00862 (LINC00862) from Homo sapiens (Human).